The following is a 294-amino-acid chain: MRTEYADRLPVDWRDYVELCKPRVVLLMLLTVIVGMYLAAPGWVSLRLIAFTLLGIGLCAGSAAAINHLVDRHIDSIMARTKKRPVAYGRVSVKQALWFAVIIGLMGLSLLILFVNQLTALLTFITLIGYAGVYTGYLKRATSQNIVIGGLAGAAPPLLGWTAVTDQLDPQALLLVLIIFTWTPPHFWALAIYRYKEYQDAEIPMLPVTHGIQFTKLNIYLYTVLLLVVSLLPFVVSMSGWIYLLGALILGIRFLVWAHKLYFTDKPVVAMQTFRFSILYLMLLFVFLLVDHYF.

9 helical membrane passes run 24-44 (VVLL…PGWV), 48-68 (LIAF…AINH), 96-116 (ALWF…LFVN), 118-138 (LTAL…TGYL), 145-165 (NIVI…TAVT), 172-192 (ALLL…ALAI), 211-231 (GIQF…VVSL), 241-263 (WIYL…KLYF), and 268-288 (VVAM…FVFL).

The protein belongs to the UbiA prenyltransferase family. Protoheme IX farnesyltransferase subfamily.

The protein resides in the cell inner membrane. It carries out the reaction heme b + (2E,6E)-farnesyl diphosphate + H2O = Fe(II)-heme o + diphosphate. Its pathway is porphyrin-containing compound metabolism; heme O biosynthesis; heme O from protoheme: step 1/1. Converts heme B (protoheme IX) to heme O by substitution of the vinyl group on carbon 2 of heme B porphyrin ring with a hydroxyethyl farnesyl side group. This is Protoheme IX farnesyltransferase from Legionella pneumophila (strain Lens).